The primary structure comprises 229 residues: Flavin-dependent thymidylate synthase (229 aa).

The 217-residue stretch at 1–217 folds into the ThyX domain; it reads MEFKVLDKGF…PWTFESFLKF (217 aa). FAD contacts are provided by residues Thr55, 78 to 80, and Glu86; that span reads RHR. DUMP contacts are provided by residues 75–78, 86–90, and Arg156; these read QWFR and EASLR. The short motif at 78–88 is the ThyX motif element; the sequence is RHRIGSFNEAS. Residues 172-174 and Asn178 contribute to the FAD site; that span reads NAR. Residue Arg183 participates in dUMP binding. Residue Arg183 is the Involved in ionization of N3 of dUMP, leading to its activation of the active site.

The protein belongs to the thymidylate synthase ThyX family. In terms of assembly, homotetramer. Requires FAD as cofactor.

The enzyme catalyses dUMP + (6R)-5,10-methylene-5,6,7,8-tetrahydrofolate + NADPH + H(+) = dTMP + (6S)-5,6,7,8-tetrahydrofolate + NADP(+). The protein operates within pyrimidine metabolism; dTTP biosynthesis. In terms of biological role, catalyzes the reductive methylation of 2'-deoxyuridine-5'-monophosphate (dUMP) to 2'-deoxythymidine-5'-monophosphate (dTMP) while utilizing 5,10-methylenetetrahydrofolate (mTHF) as the methyl donor, and NADPH and FADH(2) as the reductant. The sequence is that of Flavin-dependent thymidylate synthase from Thermosipho melanesiensis (strain DSM 12029 / CIP 104789 / BI429).